A 638-amino-acid chain; its full sequence is 1-deoxy-D-xylulose-5-phosphate synthase (638 aa).

Residues His-79 and 120-122 contribute to the thiamine diphosphate site; that span reads AHS. Asp-151 serves as a coordination point for Mg(2+). Residues 152 to 153, Asn-180, Tyr-289, and Glu-371 each bind thiamine diphosphate; that span reads GA. Asn-180 is a Mg(2+) binding site.

Belongs to the transketolase family. DXPS subfamily. In terms of assembly, homodimer. Requires Mg(2+) as cofactor. Thiamine diphosphate is required as a cofactor.

The catalysed reaction is D-glyceraldehyde 3-phosphate + pyruvate + H(+) = 1-deoxy-D-xylulose 5-phosphate + CO2. The protein operates within metabolic intermediate biosynthesis; 1-deoxy-D-xylulose 5-phosphate biosynthesis; 1-deoxy-D-xylulose 5-phosphate from D-glyceraldehyde 3-phosphate and pyruvate: step 1/1. Its function is as follows. Catalyzes the acyloin condensation reaction between C atoms 2 and 3 of pyruvate and glyceraldehyde 3-phosphate to yield 1-deoxy-D-xylulose-5-phosphate (DXP). The polypeptide is 1-deoxy-D-xylulose-5-phosphate synthase (Rhizobium etli (strain ATCC 51251 / DSM 11541 / JCM 21823 / NBRC 15573 / CFN 42)).